A 96-amino-acid polypeptide reads, in one-letter code: Small ubiquitin-related modifier 2 (96 aa).

Residue lysine 11 forms a Glycyl lysine isopeptide (Lys-Gly) (interchain with G-Cter in SUMO) linkage. A Ubiquitin-like domain is found at 16-96; that stretch reads DHINLKVAGQ…FQQQTGGHRI (81 aa). Glycine 93 is covalently cross-linked (Glycyl lysine isopeptide (Gly-Lys) (interchain with K-? in acceptor proteins)). Positions 94–96 are excised as a propeptide; the sequence is HRI.

Belongs to the ubiquitin family. SUMO subfamily. In terms of assembly, interacts with sae2 and ube2i. Covalently attached to a number of proteins. Polymeric chains can be formed through Lys-11 cross-linking. Post-translationally, cleavage of precursor form by a sentrin-specific protease is necessary for function.

Its subcellular location is the nucleus. Its function is as follows. Ubiquitin-like protein that can be covalently attached to proteins as a monomer or as a lysine-linked polymer. Covalent attachment via an isopeptide bond to its substrates requires prior activation by the E1 complex sae1-sae2 and linkage to the E2 enzyme ube2i, and can be promoted by an E3 ligase such as pias1-4. This post-translational modification on lysine residues of proteins plays a crucial role in a number of cellular processes such as nuclear transport, DNA replication and repair, mitosis and signal transduction. Polymeric sumo2 chains are also susceptible to polyubiquitination which functions as a signal for proteasomal degradation of modified proteins. In Danio rerio (Zebrafish), this protein is Small ubiquitin-related modifier 2.